The chain runs to 807 residues: 1-phosphatidylinositol 4,5-bisphosphate phosphodiesterase delta-4 (807 aa).

The PH domain occupies 16-124; sequence LLMQEGTMMR…WMRGLQLLVD (109 aa). The interval 26–53 is substrate binding; the sequence is KVRTKSWKKLRYFRLQNDGMTVWHGSQP. 3 EF-hand domains span residues 134–169, 170–205, and 203–237; these read QMDQ…MNVE, MDEE…LTKR, and TKRT…EQKE. Ca(2+) is bound by residues Asp-147, Asn-149, Asp-151, Arg-153, Glu-158, Asp-183, Ser-187, Asp-189, and Glu-194. The GBA signature appears at 213 to 243; that stretch reads EDFSSDKQKLTLLEFVDFLRKEQKEKDHAPD. Residues 290-435 enclose the PI-PLC X-box domain; the sequence is QDMTQPLSHY…LRGKILVKGK (146 aa). His-305 is an active-site residue. Ca(2+) is bound by residues Asn-306, Glu-335, and Asp-337. Residue His-350 is part of the active site. Glu-384 contributes to the Ca(2+) binding site. Substrate contacts are provided by Lys-433 and Lys-435. The interval 442–490 is disordered; that stretch reads VDKEEEEEEEEEELEKDEGPDLDPASPELDTQPQPETQGQAAGNKKERK. Positions 443 to 462 are enriched in acidic residues; sequence DKEEEEEEEEEELEKDEGPD. Positions 470-482 are enriched in polar residues; the sequence is LDTQPQPETQGQA. The region spanning 538–654 is the PI-PLC Y-box domain; it reads LSALVVYLRT…GYVLKPEFLR (117 aa). Positions 567 and 594 each coordinate substrate. Positions 654 to 781 constitute a C2 domain; that stretch reads RDTQSSFNPE…QGYRHVSLLS (128 aa). Positions 697, 721, 750, and 751 each coordinate Ca(2+). The PDZ-binding signature appears at 776–779; that stretch reads HVSL.

Interacts with GRIP1. Interacts (via GBA motif) with guanine nucleotide-binding protein G(i) alpha subunit GNAI3 (inactive GDP-bound form)l low-affinity interaction. Requires Ca(2+) as cofactor.

The protein localises to the membrane. It is found in the nucleus. It localises to the cytoplasm. The protein resides in the endoplasmic reticulum. It carries out the reaction a 1,2-diacyl-sn-glycero-3-phospho-(1D-myo-inositol-4,5-bisphosphate) + H2O = 1D-myo-inositol 1,4,5-trisphosphate + a 1,2-diacyl-sn-glycerol + H(+). It catalyses the reaction a 1,2-diacyl-sn-glycero-3-phospho-(1D-myo-inositol) + H2O = 1D-myo-inositol 1-phosphate + a 1,2-diacyl-sn-glycerol + H(+). In terms of biological role, hydrolyzes the phosphatidylinositol 4,5-bisphosphate (PIP2) to generate 2 second messenger molecules diacylglycerol (DAG) and inositol 1,4,5-trisphosphate (IP3). DAG mediates the activation of protein kinase C (PKC), while IP3 releases Ca(2+) from intracellular stores. Required for acrosome reaction in sperm during fertilization, probably by acting as an important enzyme for intracellular Ca(2+) mobilization in the zona pellucida-induced acrosome reaction. May play a role in cell growth. Modulates the liver regeneration in cooperation with nuclear PKC. Overexpression up-regulates the Erk signaling pathway and proliferation. This Mus musculus (Mouse) protein is 1-phosphatidylinositol 4,5-bisphosphate phosphodiesterase delta-4.